The following is a 417-amino-acid chain: D-amino acid dehydrogenase (417 aa).

3 to 17 (VVILGSGVVGVSTAW) lines the FAD pocket.

This sequence belongs to the DadA oxidoreductase family. The cofactor is FAD.

The enzyme catalyses a D-alpha-amino acid + A + H2O = a 2-oxocarboxylate + AH2 + NH4(+). The protein operates within amino-acid degradation; D-alanine degradation; NH(3) and pyruvate from D-alanine: step 1/1. Its function is as follows. Oxidative deamination of D-amino acids. The polypeptide is D-amino acid dehydrogenase (Pectobacterium atrosepticum (strain SCRI 1043 / ATCC BAA-672) (Erwinia carotovora subsp. atroseptica)).